We begin with the raw amino-acid sequence, 91 residues long: Small ribosomal subunit protein uS19 (91 aa).

The protein belongs to the universal ribosomal protein uS19 family.

Functionally, protein S19 forms a complex with S13 that binds strongly to the 16S ribosomal RNA. The sequence is that of Small ribosomal subunit protein uS19 from Methylacidiphilum infernorum (isolate V4) (Methylokorus infernorum (strain V4)).